Here is a 648-residue protein sequence, read N- to C-terminus: Large T antigen (648 aa).

At methionine 1 the chain carries N-acetylmethionine; by host. The region spanning 12–75 is the J domain; that stretch reads RLMHLLKLPM…LPCLSTQDFI (64 aa). Residues 103–107 carry the LXCXE motif motif; that stretch reads LFCNE. Serine 112 carries the post-translational modification Phosphoserine; by host. Residues 112-149 form a disordered region; that stretch reads SDDEQEPQPDDSAPIILSPTYPARSQATPPKKKAKMDS. Position 139 is a phosphothreonine; by host (threonine 139). The Nuclear localization signal motif lies at 140–147; that stretch reads PPKKKAKM. The T-ag OBD DNA-binding region spans 154–272; that stretch reads PADLMEYLSC…QESIEELNSE (119 aa). A T-ag D1-type zinc finger spans residues 281-373; that stretch reads AKNVNWVAIS…KTVDMAQMTR (93 aa). 4 residues coordinate Zn(2+): cysteine 318, cysteine 321, histidine 329, and histidine 333. The SF3 helicase domain maps to 418–573; the sequence is SFKDLLLELL…QYLSLKKTEC (156 aa). 444–451 contributes to the ATP binding site; the sequence is GPVNTGKT.

As to quaternary structure, forms homohexamers in the presence of ATP. Interacts with host HDAC1. Interacts (via LXCXE domain) with host RB1; the interaction induces the aberrant dissociation of RB1-E2F1 complex thereby disrupting RB1's activity. Interacts (via LXCXE domain) with host pRB-related proteins RBL1 and RBL2. Interacts (via C-terminus) with host TOP1 and POLA1 allowing DNA replication. Interacts with host preinitiation complex components TBP, TFIIA and TFIID to regulate transcription initiation. It depends on Mg(2+) as a cofactor. Phosphorylated on both serine and threonine residues. Small t antigen inhibits the dephosphorylation by the AC form of PP2A. Post-translationally, O-Glycosylated near the C-terminal region. In terms of processing, acetylated by CBP in a TP53-dependent manner.

It localises to the host nucleus. The catalysed reaction is Couples ATP hydrolysis with the unwinding of duplex DNA by translocating in the 3'-5' direction.. It catalyses the reaction ATP + H2O = ADP + phosphate + H(+). Isoform large T antigen is a key early protein essential for both driving viral replication and inducing cellular transformation. Plays a role in viral genome replication by driving entry of quiescent cells into the cell cycle and by autoregulating the synthesis of viral early mRNA. Displays highly oncogenic activities by corrupting the host cellular checkpoint mechanisms that guard cell division and the transcription, replication, and repair of DNA. Participates in the modulation of cellular gene expression preceeding viral DNA replication. This step involves binding to host key cell cycle regulators retinoblastoma protein RB1/pRb and TP53. Induces the disassembly of host E2F1 transcription factors from RB1, thus promoting transcriptional activation of E2F1-regulated S-phase genes. Inhibits host TP53 binding to DNA, abrogating the ability of TP53 to stimulate gene expression. Plays the role of a TFIID-associated factor (TAF) in transcription initiation for all three RNA polymerases, by stabilizing the TBP-TFIIA complex on promoters. Initiates viral DNA replication and unwinding via interactions with the viral origin of replication. Binds two adjacent sites in the SV40 origin. The replication fork movement is facilitated by Large T antigen helicase activity. Has processive 3'-5' DNA helicase activity which requires a short 3' single-stranded region and ATP. Activates the transcription of viral late mRNA, through host TBP and TFIIA stabilization. Interferes with histone deacetylation mediated by HDAC1, leading to activation of transcription. This is Large T antigen from Murine polyomavirus (strain Kilham) (MPyV).